Consider the following 266-residue polypeptide: Type III pantothenate kinase (266 aa).

Position 6 to 13 (6 to 13 (DAGNTNIV)) interacts with ATP. Substrate is bound by residues Y100 and 107-110 (GADR). The active-site Proton acceptor is the D109. Position 129 (D129) interacts with K(+). T132 contributes to the ATP binding site. T184 serves as a coordination point for substrate.

Belongs to the type III pantothenate kinase family. Homodimer. NH4(+) serves as cofactor. Requires K(+) as cofactor.

It is found in the cytoplasm. It catalyses the reaction (R)-pantothenate + ATP = (R)-4'-phosphopantothenate + ADP + H(+). Its pathway is cofactor biosynthesis; coenzyme A biosynthesis; CoA from (R)-pantothenate: step 1/5. Functionally, catalyzes the phosphorylation of pantothenate (Pan), the first step in CoA biosynthesis. The polypeptide is Type III pantothenate kinase (Clostridium beijerinckii (strain ATCC 51743 / NCIMB 8052) (Clostridium acetobutylicum)).